The chain runs to 146 residues: Ribosome maturation factor RimP (146 aa).

This sequence belongs to the RimP family.

It is found in the cytoplasm. Required for maturation of 30S ribosomal subunits. In Helicobacter pylori (strain P12), this protein is Ribosome maturation factor RimP.